Consider the following 81-residue polypeptide: Antimicrobial peptide D2 (81 aa).

An N-terminal signal peptide occupies residues 1-31; it reads MAKTVLGIHVTFLTLLFAVILLNDVMYTPVE. Cystine bridges form between Cys34–Cys81, Cys45–Cys66, Cys51–Cys75, and Cys55–Cys77.

Functionally, antimicrobial peptide probably active against fungi like B.sorokiniana, F.oxysporum, F.graminearum, F.avenaceum, B.cinerea, P.beta, P.infestans and P.debaryanum. The polypeptide is Antimicrobial peptide D2 (Stellaria media (Common chickweed)).